Consider the following 310-residue polypeptide: Probable cell division protein WhiA (310 aa).

The segment at residues 274-308 is a DNA-binding region (H-T-H motif); the sequence is SLKELGTLVPGGPISKSGINHRLRKINQFAEQLQK.

This sequence belongs to the WhiA family.

Its function is as follows. Involved in cell division and chromosome segregation. This chain is Probable cell division protein WhiA, found in Lactiplantibacillus plantarum (strain ATCC BAA-793 / NCIMB 8826 / WCFS1) (Lactobacillus plantarum).